Consider the following 663-residue polypeptide: MIDRKDTNRFKLVSKYSPSGDQPQAIETLVDNIEGGEKAQILKGATGTGKTYTMSQVIAQVNKPTLVIAHNKTLAGQLYGEFKEFFPDNAVEYFVSYYDYYQPEAYVPSSDTYIEKDSSVNDEIDKLRHSATSSLLERNDVIVVASVSCIYGLGSPKEYADSVVSLRPGQEISRDQLLNNLVDIQFERNDIDFQRGKFRVRGDVVEVFPASRDEHAFRIEFFGDEIDRIREIESLTGRVLGEVEHLAIFPATHFMTNDEHMEEAISKIQAEMENQVELFEKEGKLIEAQRIRQRTEYDIEMLREMGYTNGVENYSRHMDGRSEGEPPFTLLDFFPEDFLIMIDESHMTMGQIKGMYNGDRSRKEMLVNYGFRLPSALDNRPLRREEFESHVHQIVYVSATPGDYEMGQTDTVVEQIIRPTGLLDPEVEVRPSMGQMDDLLGEINLRTEKGERTFITTLTKRMAEDLTDYLKEMGVKVKYMHSDIKTLERTEIIRDLRLGVFDVLIGINLLREGIDVPEVSLVAILDADKEGFLRNERGLIQTIGRAARNSNGHVIMYADKITDSMQRAMDETARRRRLQMDYNEKHGIVPQTIKKEIRDLIAITKSNDSDKPEKVVDYSSLSKKERQAEIKALQKQMQEAAELLDFELAAQIRDVILKLKAID.

Residues 31-418 (DNIEGGEKAQ…TDTVVEQIIR (388 aa)) form the Helicase ATP-binding domain. 44–51 (GATGTGKT) lines the ATP pocket. Residues 97-120 (YYDYYQPEAYVPSSDTYIEKDSSV) carry the Beta-hairpin motif. Residues 435 to 601 (QMDDLLGEIN…TIKKEIRDLI (167 aa)) enclose the Helicase C-terminal domain. Residues 627 to 662 (QAEIKALQKQMQEAAELLDFELAAQIRDVILKLKAI) enclose the UVR domain.

It belongs to the UvrB family. As to quaternary structure, forms a heterotetramer with UvrA during the search for lesions. Interacts with UvrC in an incision complex.

Its subcellular location is the cytoplasm. Functionally, the UvrABC repair system catalyzes the recognition and processing of DNA lesions. A damage recognition complex composed of 2 UvrA and 2 UvrB subunits scans DNA for abnormalities. Upon binding of the UvrA(2)B(2) complex to a putative damaged site, the DNA wraps around one UvrB monomer. DNA wrap is dependent on ATP binding by UvrB and probably causes local melting of the DNA helix, facilitating insertion of UvrB beta-hairpin between the DNA strands. Then UvrB probes one DNA strand for the presence of a lesion. If a lesion is found the UvrA subunits dissociate and the UvrB-DNA preincision complex is formed. This complex is subsequently bound by UvrC and the second UvrB is released. If no lesion is found, the DNA wraps around the other UvrB subunit that will check the other stand for damage. The sequence is that of UvrABC system protein B from Streptococcus agalactiae serotype Ia (strain ATCC 27591 / A909 / CDC SS700).